Consider the following 109-residue polypeptide: Urocortin-2 (109 aa).

An N-terminal signal peptide occupies residues 1–22; that stretch reads MTRWALVVFMVLMLDRVPGTPI. A propeptide spanning residues 23–67 is cleaved from the precursor; sequence PTFQLLPQNYPETTPSSVSSESPSDTTTGPSASWSNSKASPYLDT. Residues 24-60 form a disordered region; that stretch reads TFQLLPQNYPETTPSSVSSESPSDTTTGPSASWSNSK. A compositionally biased stretch (low complexity) spans 33–50; sequence PETTPSSVSSESPSDTTT. Positions 51 to 60 are enriched in polar residues; it reads GPSASWSNSK. Val106 carries the valine amide; partial modification.

The protein belongs to the sauvagine/corticotropin-releasing factor/urotensin I family. Binds with high affinity to CRF receptors 2-alpha and 2-beta. In terms of processing, glycosylated.

The protein resides in the secreted. In terms of biological role, suppresses food intake, delays gastric emptying and decreases heat-induced edema. Might represent an endogenous ligand for maintaining homeostasis after stress. This chain is Urocortin-2 (Ucn2), found in Rattus norvegicus (Rat).